We begin with the raw amino-acid sequence, 332 residues long: Torsin-1A (332 aa).

A signal peptide spans 1–20 (MKLGRAALGLLLLAPSVVQA). The segment at 91 to 251 (KPKKPLTLSL…VSVFNNKNSG (161 aa)) is interaction with SNAPIN. 102 to 109 (GWTGTGKN) contacts ATP. N-linked (GlcNAc...) asparagine glycans are attached at residues Asn-143 and Asn-158. An interaction with KLC1 region spans residues 251-332 (GFWHSSLIDR…FTKLDYYYDD (82 aa)). Residues 312–332 (RVFSDKGCKTVFTKLDYYYDD) form an interaction with SYNE3 region.

This sequence belongs to the ClpA/ClpB family. Torsin subfamily. As to quaternary structure, homohexamer. Interacts with TOR1B; the interaction may be specific of neural tissues. Interacts (ATP-bound) with TOR1AIP1 and TOR1AIP2; the interactions induce ATPase activity. Interacts with KLHL14; preferentially when ATP-free. Interacts with KLC1 (via TPR repeats); the interaction associates TOR1A with the kinesin oligomeric complex. Interacts with COPS4; the interaction associates TOR1A with the CSN complex. Interacts with SNAPIN; the interaction is direct and associates SNAPIN with the CSN complex. Interacts with STON2. Interacts (ATP-bound) with SYNE3 (via KASH domain); the interaction is required for SYNE3 nuclear envelope localization. Interacts with VIM; the interaction associates TOR1A with the cytoskeleton. Interacts with PLEC. Interacts (ATP-bound) with SLC6A3; regulates SLC6A3 transport to the plasma membrane. In terms of processing, N-glycosylated.

It is found in the endoplasmic reticulum lumen. The protein localises to the nucleus membrane. The protein resides in the cell projection. It localises to the growth cone. Its subcellular location is the cytoplasmic vesicle membrane. It is found in the cytoplasmic vesicle. The protein localises to the secretory vesicle. The protein resides in the synaptic vesicle. It localises to the cytoplasm. Its subcellular location is the cytoskeleton. It catalyses the reaction ATP + H2O = ADP + phosphate + H(+). Functionally, protein with chaperone functions important for the control of protein folding, processing, stability and localization as well as for the reduction of misfolded protein aggregates. Involved in the regulation of synaptic vesicle recycling, controls STON2 protein stability in collaboration with the COP9 signalosome complex (CSN). In the nucleus, may link the cytoskeleton with the nuclear envelope, this mechanism seems to be crucial for the control of nuclear polarity, cell movement and, specifically in neurons, nuclear envelope integrity. Participates in the cellular trafficking and may regulate the subcellular location of multipass membrane proteins such as the dopamine transporter SLC6A3, leading to the modulation of dopamine neurotransmission. In the endoplasmic reticulum, plays a role in the quality control of protein folding by increasing clearance of misfolded proteins such as SGCE variants or holding them in an intermediate state for proper refolding. May have a redundant function with TOR1B in non-neural tissues. In Macaca fascicularis (Crab-eating macaque), this protein is Torsin-1A (TOR1A).